Reading from the N-terminus, the 171-residue chain is Adenine phosphoribosyltransferase (171 aa).

It belongs to the purine/pyrimidine phosphoribosyltransferase family. Homodimer.

The protein localises to the cytoplasm. The enzyme catalyses AMP + diphosphate = 5-phospho-alpha-D-ribose 1-diphosphate + adenine. Its pathway is purine metabolism; AMP biosynthesis via salvage pathway; AMP from adenine: step 1/1. Its function is as follows. Catalyzes a salvage reaction resulting in the formation of AMP, that is energically less costly than de novo synthesis. In Mycoplasmopsis fermentans (strain ATCC 19989 / NBRC 14854 / NCTC 10117 / PG18) (Mycoplasma fermentans), this protein is Adenine phosphoribosyltransferase.